The following is a 270-amino-acid chain: tRNA pseudouridine synthase A (270 aa).

Residue aspartate 60 is the Nucleophile of the active site. The segment at 107–111 (FHARF) is RNA binding. Tyrosine 118 provides a ligand contact to substrate. The interval 168–172 (QCQSR) is interaction with tRNA.

The protein belongs to the tRNA pseudouridine synthase TruA family. In terms of assembly, homodimer.

It carries out the reaction uridine(38/39/40) in tRNA = pseudouridine(38/39/40) in tRNA. Formation of pseudouridine at positions 38, 39 and 40 in the anticodon stem and loop of transfer RNAs. The sequence is that of tRNA pseudouridine synthase A from Escherichia fergusonii (strain ATCC 35469 / DSM 13698 / CCUG 18766 / IAM 14443 / JCM 21226 / LMG 7866 / NBRC 102419 / NCTC 12128 / CDC 0568-73).